The sequence spans 159 residues: Ribosomal RNA large subunit methyltransferase H (159 aa).

S-adenosyl-L-methionine-binding positions include Leu76, Gly108, and 127-132; that span reads FSKMTF.

This sequence belongs to the RNA methyltransferase RlmH family. Homodimer.

Its subcellular location is the cytoplasm. It carries out the reaction pseudouridine(1915) in 23S rRNA + S-adenosyl-L-methionine = N(3)-methylpseudouridine(1915) in 23S rRNA + S-adenosyl-L-homocysteine + H(+). In terms of biological role, specifically methylates the pseudouridine at position 1915 (m3Psi1915) in 23S rRNA. This is Ribosomal RNA large subunit methyltransferase H from Clostridium botulinum (strain Langeland / NCTC 10281 / Type F).